Here is a 425-residue protein sequence, read N- to C-terminus: UDP-sugar transporter protein SLC35A5 (425 aa).

At 1-7 the chain is on the cytoplasmic side; sequence MESNCGH. Residues 8-28 traverse the membrane as a helical segment; that stretch reads PMLSVSSAMYTFLLGAIFITL. Over 29–52 the chain is Lumenal; the sequence is SSSRILLVKYSANEENKYDYLPTT. Residues 53 to 73 form a helical membrane-spanning segment; that stretch reads VNVCSELVKLVFCALVSFWVL. The Cytoplasmic portion of the chain corresponds to 74-92; the sequence is KKEDHQNRKLRCGSWKEFF. A helical transmembrane segment spans residues 93-115; that stretch reads NFMKWSIPAFLYFLDNLIVFYVL. Topologically, residues 116-119 are lumenal; it reads SYLQ. A helical membrane pass occupies residues 120–142; that stretch reads PAMAVIFSNFSIITTALLFRIVL. The Cytoplasmic segment spans residues 143-147; that stretch reads KRHLN. A helical transmembrane segment spans residues 148-168; that stretch reads GIQWASLLILFLSIVALTSGT. Residues 169–228 lie on the Lumenal side of the membrane; that stretch reads ETSQHSLAGHGFHHDALFSPSNSCLLFRSECPRKDNCTAKEWTFSEAQWNTTARVFSHIR. 2 N-linked (GlcNAc...) asparagine glycosylation sites follow: N204 and N218. Residues 229–249 traverse the membrane as a helical segment; the sequence is LGLGHVLIIVQCFISSMANIY. Residues 250–263 lie on the Cytoplasmic side of the membrane; it reads NEKILKEGNQLTES. The chain crosses the membrane as a helical span at residues 264–284; the sequence is IFVQNSKLYFFGVLFNGLTLG. Residues 285-303 are Lumenal-facing; sequence LQSGNRDQIKNCGIFYGHN. Residues 304-324 form a helical membrane-spanning segment; it reads AFSVALIFVTAFQGLSVAFIL. Residues 325–330 lie on the Cytoplasmic side of the membrane; that stretch reads KFLDNM. Residues 331 to 351 form a helical membrane-spanning segment; that stretch reads FHVLMAQVTTVVITTVSVLVF. Over 352 to 354 the chain is Lumenal; sequence DFR. The chain crosses the membrane as a helical span at residues 355 to 375; the sequence is PSLEFFLEAPSVLLSILIYNA. Over 376-425 the chain is Cytoplasmic; the sequence is SNPQGVENVPRKERIRDLSGTLWERSSGDGEELERLTKPKSDIESDEDTF. 3 positions are modified to phosphoserine: S394, S416, and S420. The disordered stretch occupies residues 398 to 425; the sequence is WERSSGDGEELERLTKPKSDIESDEDTF. Residues 408 to 418 are compositionally biased toward basic and acidic residues; that stretch reads LERLTKPKSDI.

Belongs to the nucleotide-sugar transporter family. SLC35A subfamily. Probably forms homooligomers and heterooligomers with SLC35A1, SLC35A2, SLC35A3 and SLC35A4.

The protein resides in the golgi apparatus membrane. It catalyses the reaction UMP(out) + UDP-alpha-D-glucuronate(in) = UMP(in) + UDP-alpha-D-glucuronate(out). The enzyme catalyses UMP(out) + UDP-N-acetyl-alpha-D-glucosamine(in) = UMP(in) + UDP-N-acetyl-alpha-D-glucosamine(out). It carries out the reaction UDP-N-acetyl-alpha-D-galactosamine(in) + UMP(out) = UDP-N-acetyl-alpha-D-galactosamine(out) + UMP(in). Functionally, probable UDP-sugar:UMP transmembrane antiporter involved in UDP-alpha-D-glucuronate/UDP-GlcA, UDP-GlcNAc/UDP-N-acetyl-alpha-D-glucosamine and UDP-N-acetyl-alpha-D-galactosamine/UDP-GalNAc transport from the cytosol to the lumen of the Golgi. This is UDP-sugar transporter protein SLC35A5 from Bos taurus (Bovine).